We begin with the raw amino-acid sequence, 760 residues long: General transcription and DNA repair factor IIH helicase subunit XPD (760 aa).

Residues Gly7–Glu283 enclose the Helicase ATP-binding domain. Met42–Thr49 is a binding site for ATP. [4Fe-4S] cluster is bound by residues Cys116, Cys134, Cys155, and Cys190. Positions Asp234–His237 match the DEAH box motif. The segment at Met438–Leu637 is mediates interaction with MMS19. The short motif at Lys682 to Arg695 is the Nuclear localization signal element.

This sequence belongs to the helicase family. RAD3/XPD subfamily. Component of the 7-subunit TFIIH core complex composed of XPB/ERCC3, XPD/ERCC2, GTF2H1, GTF2H2, GTF2H3, GTF2H4 and GTF2H5, which is active in NER. The core complex associates with the 3-subunit CDK-activating kinase (CAK) module composed of CCNH/cyclin H, CDK7 and MNAT1 to form the 10-subunit holoenzyme (holo-TFIIH) active in transcription. The interaction with GTF2H2 results in the stimulation of the 5'--&gt;3' helicase activity. Component of the MMXD complex, which includes CIAO1, ERCC2, CIAO2B, MMS19 and SLC25A5. Interacts with CIAO1 and CIAO2B; the interaction WITH CIAO2B is direct. Interacts with ATF7IP. Interacts directly with MMS19. Part of TBP-based Pol II pre-initiation complex (PIC), in which Pol II core assembles with general transcription factors and other specific initiation factors including GTF2E1, GTF2E2, GTF2F1, GTF2F2, TCEA1, ERCC2, ERCC3, GTF2H2, GTF2H3, GTF2H4, GTF2H5, GTF2A1, GTF2A2, GTF2B and TBP; this large multi-subunit PIC complex mediates DNA unwinding and targets Pol II core to the transcription start site where the first phosphodiester bond forms. Mg(2+) is required as a cofactor. The cofactor is [4Fe-4S] cluster. Post-translationally, ISGylated.

It localises to the nucleus. The protein resides in the cytoplasm. It is found in the cytoskeleton. Its subcellular location is the spindle. The enzyme catalyses Couples ATP hydrolysis with the unwinding of duplex DNA at the replication fork by translocating in the 5'-3' direction. This creates two antiparallel DNA single strands (ssDNA). The leading ssDNA polymer is the template for DNA polymerase III holoenzyme which synthesizes a continuous strand.. It carries out the reaction ATP + H2O = ADP + phosphate + H(+). In terms of biological role, ATP-dependent 5'-3' DNA helicase, component of the general transcription and DNA repair factor IIH (TFIIH) core complex, which is involved in general and transcription-coupled nucleotide excision repair (NER) of damaged DNA and, when complexed to CDK-activating kinase (CAK), involved in transcription by RNA polymerase II. In NER, TFIIH acts by opening DNA around the lesion to allow the excision of the damaged oligonucleotide and its replacement by a new DNA fragment. The ATP-dependent helicase activity of XPD/ERCC2 is required for DNA opening. In transcription, TFIIH has an essential role in transcription initiation. When the pre-initiation complex (PIC) has been established, TFIIH is required for promoter opening and promoter escape. Phosphorylation of the C-terminal tail (CTD) of the largest subunit of RNA polymerase II by the kinase module CAK controls the initiation of transcription. XPD/ERCC2 acts by forming a bridge between CAK and the core-TFIIH complex. Involved in the regulation of vitamin-D receptor activity. As part of the mitotic spindle-associated MMXD complex it plays a role in chromosome segregation. Might have a role in aging process and could play a causative role in the generation of skin cancers. The chain is General transcription and DNA repair factor IIH helicase subunit XPD (ERCC2) from Bos taurus (Bovine).